The chain runs to 327 residues: tRNA-dihydrouridine(20/20a) synthase (327 aa).

FMN is bound by residues 17 to 19 (PML) and Q69. The active-site Proton donor is the C99. FMN-binding positions include K138, H170, 210-212 (NGG), and 232-233 (GR).

It belongs to the Dus family. DusA subfamily. Requires FMN as cofactor.

The catalysed reaction is 5,6-dihydrouridine(20) in tRNA + NADP(+) = uridine(20) in tRNA + NADPH + H(+). The enzyme catalyses 5,6-dihydrouridine(20) in tRNA + NAD(+) = uridine(20) in tRNA + NADH + H(+). It catalyses the reaction 5,6-dihydrouridine(20a) in tRNA + NADP(+) = uridine(20a) in tRNA + NADPH + H(+). It carries out the reaction 5,6-dihydrouridine(20a) in tRNA + NAD(+) = uridine(20a) in tRNA + NADH + H(+). Catalyzes the synthesis of 5,6-dihydrouridine (D), a modified base found in the D-loop of most tRNAs, via the reduction of the C5-C6 double bond in target uridines. Specifically modifies U20 and U20a in tRNAs. The polypeptide is tRNA-dihydrouridine(20/20a) synthase (Pasteurella multocida (strain Pm70)).